The primary structure comprises 111 residues: Type III endosome membrane protein TEMP (111 aa).

Over Met-1–Arg-27 the chain is Extracellular. Asn-5 is a glycosylation site (N-linked (GlcNAc...) asparagine). Residues Ala-28–Leu-48 traverse the membrane as a helical; Signal-anchor for type III membrane protein segment. The Cytoplasmic segment spans residues Ala-49–Leu-111. Residues His-64–Leu-111 are disordered. A compositionally biased stretch (acidic residues) spans Gly-79–Ile-88.

In terms of tissue distribution, expressed in stomach, kidney, large and small intestine and kidney.

The protein localises to the membrane. Its subcellular location is the early endosome. It is found in the recycling endosome. The protein resides in the cell membrane. Its function is as follows. May be involved in membrane trafficking between endosomes and plasma membrane. In Mus musculus (Mouse), this protein is Type III endosome membrane protein TEMP.